A 184-amino-acid chain; its full sequence is uncharacterized protein (184 aa).

Residues 1-20 (MTLRKILALTCLLLPMMASA) form the signal peptide.

This sequence to H.influenzae HI_0045.

The protein resides in the periplasm. This is an uncharacterized protein from Escherichia coli (strain K12).